The sequence spans 89 residues: Large ribosomal subunit protein bL27 (89 aa).

The segment at Met1–Gly22 is disordered.

It belongs to the bacterial ribosomal protein bL27 family.

The protein is Large ribosomal subunit protein bL27 of Bartonella tribocorum (strain CIP 105476 / IBS 506).